The sequence spans 153 residues: Large ribosomal subunit protein uL15 (153 aa).

The tract at residues Arg-21–Ser-40 is disordered. Gly residues predominate over residues Ile-23–Ile-35.

It belongs to the universal ribosomal protein uL15 family. In terms of assembly, part of the 50S ribosomal subunit.

In terms of biological role, binds to the 23S rRNA. The sequence is that of Large ribosomal subunit protein uL15 from Rickettsia canadensis (strain McKiel).